Consider the following 365-residue polypeptide: Phosphoserine aminotransferase (365 aa).

Residue arginine 40 participates in L-glutamate binding. Residues 74–75 (AS), phenylalanine 99, threonine 155, aspartate 177, and glutamine 200 contribute to the pyridoxal 5'-phosphate site. Lysine 201 is subject to N6-(pyridoxal phosphate)lysine. 241–242 (NT) provides a ligand contact to pyridoxal 5'-phosphate.

Belongs to the class-V pyridoxal-phosphate-dependent aminotransferase family. SerC subfamily. As to quaternary structure, homodimer. Requires pyridoxal 5'-phosphate as cofactor.

The protein resides in the cytoplasm. The catalysed reaction is O-phospho-L-serine + 2-oxoglutarate = 3-phosphooxypyruvate + L-glutamate. It catalyses the reaction 4-(phosphooxy)-L-threonine + 2-oxoglutarate = (R)-3-hydroxy-2-oxo-4-phosphooxybutanoate + L-glutamate. It functions in the pathway amino-acid biosynthesis; L-serine biosynthesis; L-serine from 3-phospho-D-glycerate: step 2/3. Catalyzes the reversible conversion of 3-phosphohydroxypyruvate to phosphoserine and of 3-hydroxy-2-oxo-4-phosphonooxybutanoate to phosphohydroxythreonine. In Lactococcus lactis subsp. cremoris (strain SK11), this protein is Phosphoserine aminotransferase.